The sequence spans 225 residues: MDSLTSILTPIHREGHRFAIIFAAVTIVLFLIWNPLGWIGVILTLWCLYFFRDPDRVTPTREGLVVSPADGIVNLITEASPPEELGLGDMVRTRVSIFMNVFNCHVNRAPVAGTVKRVAYRPGLFLNADLDKASDANERNSLLIERADGEQIVVVQIAGLVARRIVCDVREGHDLAAGERFGIIRFGSRLDVYLPVGAIPLVAVGQTAIAGETVLADSISVLPQV.

Ser-188 functions as the Schiff-base intermediate with substrate; via pyruvic acid in the catalytic mechanism. Ser-188 bears the Pyruvic acid (Ser); by autocatalysis mark.

This sequence belongs to the phosphatidylserine decarboxylase family. PSD-A subfamily. Heterodimer of a large membrane-associated beta subunit and a small pyruvoyl-containing alpha subunit. The cofactor is pyruvate. Post-translationally, is synthesized initially as an inactive proenzyme. Formation of the active enzyme involves a self-maturation process in which the active site pyruvoyl group is generated from an internal serine residue via an autocatalytic post-translational modification. Two non-identical subunits are generated from the proenzyme in this reaction, and the pyruvate is formed at the N-terminus of the alpha chain, which is derived from the carboxyl end of the proenzyme. The post-translation cleavage follows an unusual pathway, termed non-hydrolytic serinolysis, in which the side chain hydroxyl group of the serine supplies its oxygen atom to form the C-terminus of the beta chain, while the remainder of the serine residue undergoes an oxidative deamination to produce ammonia and the pyruvoyl prosthetic group on the alpha chain.

It is found in the cell membrane. It carries out the reaction a 1,2-diacyl-sn-glycero-3-phospho-L-serine + H(+) = a 1,2-diacyl-sn-glycero-3-phosphoethanolamine + CO2. The protein operates within phospholipid metabolism; phosphatidylethanolamine biosynthesis; phosphatidylethanolamine from CDP-diacylglycerol: step 2/2. Functionally, catalyzes the formation of phosphatidylethanolamine (PtdEtn) from phosphatidylserine (PtdSer). The sequence is that of Phosphatidylserine decarboxylase proenzyme from Parvibaculum lavamentivorans (strain DS-1 / DSM 13023 / NCIMB 13966).